The primary structure comprises 478 residues: MTNQLTTNEGQPWADNQHSQTAGQRGPVLIQDYQLLEKLAHFNRERIPERVVHAKGAGAKGYFKVTKDMSAYTKAAVFSGVGKKTPLITRFSQVAGEAGYPDTYRDVRGFAVKFYTEEGNYDIVGNNTPVFFVNDPLKFPDFIHSQKRDPRTHARSQDMQWDFWSLSPESVHQVTILMSDRGIPASYRMMHGFGSHTFKWVNAQGEQFWVKYHFKTNQGIHNLSNELADELAGKDTDYLQNDLFDAIETGDYPSWTVAVQLVPYEDGLNYPQDIFDVTKVISQKDYPLIEIGQMVLDENPTNNFEDIQELAFSPANLVPGIEASPDKLLQGRLFGYKDAERYRLGANYEQLPVNRPKVPVHNYERDGAMAQNQATGVNYEPNSQDGPTEVPAAKIHGDQLSGTTGNFSADPDYYSAAGKLYRLLSADEQTRLIENIRMNLGQVTKPEIQIREVKQFYQADPEYGRRVATSVKLRFSSV.

Positions 1 to 23 are disordered; that stretch reads MTNQLTTNEGQPWADNQHSQTAG. Active-site residues include H53 and N126. Position 336 (Y336) interacts with heme.

The protein belongs to the catalase family. Heme is required as a cofactor.

The protein resides in the cytoplasm. It carries out the reaction 2 H2O2 = O2 + 2 H2O. Its function is as follows. Decomposes hydrogen peroxide into water and oxygen; serves to protect cells from the toxic effects of hydrogen peroxide. This is Catalase (katA) from Latilactobacillus sakei (Lactobacillus sakei).